We begin with the raw amino-acid sequence, 185 residues long: UPF0397 protein PAM_019 (185 aa).

5 helical membrane-spanning segments follow: residues 13-33, 42-62, 69-89, 109-129, and 143-163; these read IGLSAAIFFVLSCFASIPVGF, AFLAFIAVAFGPAVGFYVGLI, FILFGNVSWNWVLCSALIGFI, IVYFWLYQVAFNFIIWGFFAP, and VYLQSFLIVISNILAYSVVGI.

Belongs to the UPF0397 family.

Its subcellular location is the cell membrane. This chain is UPF0397 protein PAM_019, found in Onion yellows phytoplasma (strain OY-M).